We begin with the raw amino-acid sequence, 296 residues long: MSHPVFVRPELVVDNVTVTYNNGHTAIYDASFSLTGGTICALVGVNGSGKSTLFKSIMGLVKPSVGKVELSHKPISHALKQNTIAYVPQTEDVDWNFPVLVEDVVMMGRYGKMNFLRIPSREDKAIVNKSIERVGLTALRSRQIGELSGGQKKRVFLARALAQQGTLLLLDEPFTGVDVKTENAIIELLQSLRDEGHLILVSTHNLGSVPEFCDHVILINQTVLAAGPIETTFTQKNLEMTFGGVLRHINLSGTALHDDNDPRTVTVITDDERPAVFYGHTKNDPPAQSQSKEQNS.

In terms of domain architecture, ABC transporter spans 11-246 (LVVDNVTVTY…NLEMTFGGVL (236 aa)). 44-51 (GVNGSGKS) contributes to the ATP binding site. Residues 276-296 (VFYGHTKNDPPAQSQSKEQNS) form a disordered region. Residues 286 to 296 (PAQSQSKEQNS) show a composition bias toward polar residues.

This sequence belongs to the ABC transporter superfamily.

It is found in the cell inner membrane. Part of an ATP-driven transport system YfeABCD for chelated iron. This is Chelated iron transport system membrane protein YfeB (yfeB) from Yersinia pestis.